Consider the following 292-residue polypeptide: 6-phospho-5-dehydro-2-deoxy-D-gluconate aldolase (292 aa).

The Proton donor role is filled by Asp85. His86 and His180 together coordinate Zn(2+). Gly181 provides a ligand contact to dihydroxyacetone phosphate. His208 contacts Zn(2+). Dihydroxyacetone phosphate contacts are provided by residues 209–211 (GAS) and 230–233 (NINT). Thr233 is modified (phosphothreonine).

It belongs to the class II fructose-bisphosphate aldolase family. IolJ subfamily. It depends on Zn(2+) as a cofactor.

It carries out the reaction 6-phospho-5-dehydro-2-deoxy-D-gluconate = 3-oxopropanoate + dihydroxyacetone phosphate. It participates in polyol metabolism; myo-inositol degradation into acetyl-CoA; acetyl-CoA from myo-inositol: step 6/7. Functionally, produces dihydroxyacetone phosphate (DHAP or glycerone phosphate) and malonic semialdehyde (MSA or 3-oxopropanoate) from 6-phospho-5-dehydro-2-deoxy-D-gluconate (DKGP). The chain is 6-phospho-5-dehydro-2-deoxy-D-gluconate aldolase (iolJ) from Bacillus licheniformis (strain ATCC 14580 / DSM 13 / JCM 2505 / CCUG 7422 / NBRC 12200 / NCIMB 9375 / NCTC 10341 / NRRL NRS-1264 / Gibson 46).